We begin with the raw amino-acid sequence, 291 residues long: Homoserine kinase (291 aa).

80–90 (PLARGLGSSST) contacts ATP.

It belongs to the GHMP kinase family. Homoserine kinase subfamily.

The protein localises to the cytoplasm. The enzyme catalyses L-homoserine + ATP = O-phospho-L-homoserine + ADP + H(+). It functions in the pathway amino-acid biosynthesis; L-threonine biosynthesis; L-threonine from L-aspartate: step 4/5. Functionally, catalyzes the ATP-dependent phosphorylation of L-homoserine to L-homoserine phosphate. The protein is Homoserine kinase of Lactiplantibacillus plantarum (strain ATCC BAA-793 / NCIMB 8826 / WCFS1) (Lactobacillus plantarum).